The sequence spans 1007 residues: Serine/threonine-protein kinase PRP4 homolog (1007 aa).

Positions 1–102 are disordered; that stretch reads MAATEPPSLR…LSPAKRTKLD (102 aa). Ala2 carries the post-translational modification N-acetylalanine. Phosphoserine occurs at positions 8, 21, 24, and 33. Basic residues-rich tracts occupy residues 40-60 and 68-82; these read KHSRHKKKKHKHRSKHKKHKH and KKHKHKHKHKKHKRK. The span at 83 to 92 shows a compositional bias: basic and acidic residues; it reads EVIEASDKEG. A phosphoserine mark is found at Ser88 and Ser94. Lys100 carries the post-translational modification N6-acetyllysine; alternate. Lys100 participates in a covalent cross-link: Glycyl lysine isopeptide (Lys-Gly) (interchain with G-Cter in SUMO2); alternate. Residue Lys112 forms a Glycyl lysine isopeptide (Lys-Gly) (interchain with G-Cter in SUMO2) linkage. A Glycyl lysine isopeptide (Lys-Gly) (interchain with G-Cter in SUMO2); alternate cross-link involves residue Lys118. Lys118 participates in a covalent cross-link: Glycyl lysine isopeptide (Lys-Gly) (interchain with G-Cter in SUMO1); alternate. Phosphoserine is present on Ser132. Tyr141 bears the Phosphotyrosine mark. 2 disordered regions span residues 141–535 and 560–583; these read YESG…EDEE and NISVPSEPSSPQSSTRSRSPSPDD. 3 positions are modified to phosphoserine: Ser143, Ser145, and Ser167. The span at 158-169 shows a compositional bias: low complexity; that stretch reads GNRSSTRSSSTR. Residues Lys171 and Lys178 each participate in a glycyl lysine isopeptide (Lys-Gly) (interchain with G-Cter in SUMO2) cross-link. 2 stretches are compositionally biased toward basic residues: residues 180 to 203 and 215 to 231; these read SAKKRSKSRSKERTRHRSDKRKSK and RSKSKERRKSKSPSKRS. 6 positions are modified to phosphoserine: Ser240, Ser242, Ser258, Ser278, Ser292, and Ser294. A compositionally biased stretch (basic and acidic residues) spans 248–271; it reads RSQEKVGKARSPAEEKMKSEEKGK. Residues 294-303 are compositionally biased toward basic and acidic residues; sequence SPVDLRDKSK. Basic residues predominate over residues 304-315; sequence DRRSRSKERKSK. Positions 316–325 are enriched in basic and acidic residues; sequence RSEIDKEKKP. A phosphoserine mark is found at Ser328, Ser354, Ser356, Ser366, and Ser368. Basic residues predominate over residues 342–367; the sequence is PSRRPGRSPKRRSLSPKLRDKSRRSR. Thr385 is modified (phosphothreonine). Ser387 carries the post-translational modification Phosphoserine. Composition is skewed to basic and acidic residues over residues 395 to 408 and 415 to 429; these read RSLERKRREPERRR and RPRDDILGRCERSKD. A phosphoserine mark is found at Ser427, Ser431, and Ser437. Basic residues predominate over residues 438–497; it reads PTRRRSRSPIRRRSRSPLRRSRSPRRRSRSPRRRDRSRRSRSRLRRRSRSRGGHRRRSRS. 8 positions are modified to phosphoserine: Ser518, Ser519, Ser520, Ser565, Ser569, Ser576, Ser578, and Ser580. Residues 518–535 show a composition bias toward acidic residues; it reads SSSDDNLEDFDVEEEDEE. The segment covering 562–581 has biased composition (low complexity); that stretch reads SVPSEPSSPQSSTRSRSPSP. Residues Lys593 and Lys659 each participate in a glycyl lysine isopeptide (Lys-Gly) (interchain with G-Cter in SUMO2) cross-link. The Protein kinase domain maps to 687–1006; it reads YNVYGYTGQG…ALQHAFIQEK (320 aa). ATP contacts are provided by residues 693–701 and Lys717; that span reads TGQGVFSNV. Lys717 bears the N6-acetyllysine mark. Asp815 serves as the catalytic Proton acceptor. Tyr849 is modified (phosphotyrosine). Ser852 bears the Phosphoserine mark.

This sequence belongs to the protein kinase superfamily. CMGC Ser/Thr protein kinase family. Interacts with CLK1 C-terminus. Associates with the U5 snRNP and NCOR1 deacetylase complexes. Identified in the spliceosome C complex. Phosphorylated by CLK1. Autophosphorylated; phosphorylation inhibits interaction with its targets, such as PRPF6 or SMARCA4.

It is found in the nucleus. Its subcellular location is the chromosome. The protein resides in the centromere. The protein localises to the kinetochore. The enzyme catalyses L-seryl-[protein] + ATP = O-phospho-L-seryl-[protein] + ADP + H(+). It catalyses the reaction L-threonyl-[protein] + ATP = O-phospho-L-threonyl-[protein] + ADP + H(+). In terms of biological role, serine/threonine kinase involved in spliceosomal assembly as well as mitosis and signaling regulation. Connects chromatin mediated regulation of transcription and pre-mRNA splicing. During spliceosomal assembly, interacts with and phosphorylates PRPF6 and PRPF31, components of the U4/U6-U5 tri-small nuclear ribonucleoprotein (snRNP), to facilitate the formation of the spliceosome B complex. Plays a role in regulating transcription and the spindle assembly checkpoint (SAC). Associates with U5 snRNP and NCOR1 deacetylase complexes which may allow a coordination of pre-mRNA splicing with chromatin remodeling events involved in transcriptional regulation. Associates and probably phosphorylates SMARCA4 and NCOR1. Phosphorylates SRSF1. Associates with kinetochores during mitosis and is necessary for recruitment and maintenance of the checkpoint proteins such as MAD1L1 and MAD12L1 at the kinetochores. Phosphorylates and regulates the activity of the transcription factors such as ELK1 and KLF13. Phosphorylates nuclear YAP1 and WWTR1/TAZ which induces nuclear exclusion and regulates Hippo signaling pathway, involved in tissue growth control. The polypeptide is Serine/threonine-protein kinase PRP4 homolog (Prp4k) (Mus musculus (Mouse)).